Here is a 219-residue protein sequence, read N- to C-terminus: Protein-L-isoaspartate O-methyltransferase (219 aa).

Serine 65 is an active-site residue.

It belongs to the methyltransferase superfamily. L-isoaspartyl/D-aspartyl protein methyltransferase family. In terms of assembly, monomer.

The protein resides in the cytoplasm. It carries out the reaction [protein]-L-isoaspartate + S-adenosyl-L-methionine = [protein]-L-isoaspartate alpha-methyl ester + S-adenosyl-L-homocysteine. Functionally, catalyzes the methyl esterification of L-isoaspartyl residues in peptides and proteins that result from spontaneous decomposition of normal L-aspartyl and L-asparaginyl residues. It plays a role in the repair and/or degradation of damaged proteins. This chain is Protein-L-isoaspartate O-methyltransferase (pcm), found in Pyrococcus furiosus (strain ATCC 43587 / DSM 3638 / JCM 8422 / Vc1).